Here is a 68-residue protein sequence, read N- to C-terminus: uncharacterized protein (68 aa).

This sequence to bacterial proteins yidD.

This is an uncharacterized protein from Haemophilus influenzae (Bacteriophage HP1).